A 284-amino-acid polypeptide reads, in one-letter code: Tropomyosin alpha-1 chain (284 aa).

Position 1 is an N-acetylmethionine (M1). Residues 1-40 (MDAIKKKMQMLKLDKENALDRAEQAESDKKASEDRSKQLE) are disordered. Residues 1 to 284 (MDAIKKKMQM…DHALNDMTSI (284 aa)) are a coiled coil. Positions 12-40 (KLDKENALDRAEQAESDKKASEDRSKQLE) are enriched in basic and acidic residues.

As to quaternary structure, homodimer. Heterodimer of an alpha (TPM1, TPM3 or TPM4) and a beta (TPM2) chain.

The protein localises to the cytoplasm. It is found in the cytoskeleton. Binds to actin filaments in muscle and non-muscle cells. Plays a central role, in association with the troponin complex, in the calcium dependent regulation of vertebrate striated muscle contraction. Smooth muscle contraction is regulated by interaction with caldesmon. In non-muscle cells is implicated in stabilizing cytoskeleton actin filaments. This Chelon auratus (Golden grey mullet) protein is Tropomyosin alpha-1 chain.